The following is a 155-amino-acid chain: Sec-independent protein translocase protein TatB (155 aa).

The helical transmembrane segment at 1–21 (MFGMGFFEILVVLVVAIIFLG) threads the bilayer. A disordered region spans residues 109-155 (SLENNAPPKHLNKEVSNREVFHNEPPKEIELIANNNTTKHDKEKEHV). Composition is skewed to basic and acidic residues over residues 119–138 (LNKE…KEIE) and 146–155 (TKHDKEKEHV).

It belongs to the TatB family. As to quaternary structure, the Tat system comprises two distinct complexes: a TatABC complex, containing multiple copies of TatA, TatB and TatC subunits, and a separate TatA complex, containing only TatA subunits. Substrates initially bind to the TatABC complex, which probably triggers association of the separate TatA complex to form the active translocon.

It is found in the cell inner membrane. Part of the twin-arginine translocation (Tat) system that transports large folded proteins containing a characteristic twin-arginine motif in their signal peptide across membranes. Together with TatC, TatB is part of a receptor directly interacting with Tat signal peptides. TatB may form an oligomeric binding site that transiently accommodates folded Tat precursor proteins before their translocation. The chain is Sec-independent protein translocase protein TatB from Helicobacter acinonychis (strain Sheeba).